A 311-amino-acid polypeptide reads, in one-letter code: MADNIYVVGHKSPDTDSVTSAITYANLKNQLGMKDVVPAAAGEINNETKYVLEYFKIAPPVVLNDATDKKVILVDHNEVGQAVDNIMKADILEIIDHHKIGDIQTGKPIFFHNEPVGATGTIIASMYELNGVAISKEMAGLMMAAILSDTVLFKSPTCTDKDKATVEKLSKICGEDPQKFGMEMLKAKSDIKSKTAKDILFGDFKKFDFSGVKAGVGQIEVMDLADLAPKREEILAEMRKALESEKLDMIVLMLTDVIKEASDLLFVGTAAAKEGFEKAFGGKVTNNSIYKEKVLSRKKQVIPPLESAFKK.

Positions 10, 14, 16, 75, 97, and 149 each coordinate Mn(2+).

It belongs to the PPase class C family. In terms of assembly, homodimer. Mn(2+) is required as a cofactor.

It catalyses the reaction diphosphate + H2O = 2 phosphate + H(+). In Methanothrix thermoacetophila (strain DSM 6194 / JCM 14653 / NBRC 101360 / PT) (Methanosaeta thermophila), this protein is Manganese-dependent inorganic pyrophosphatase (ppaC).